An 898-amino-acid chain; its full sequence is Phosphoenolpyruvate carboxylase (898 aa).

Active-site residues include His134 and Lys564.

The protein belongs to the PEPCase type 1 family. Mg(2+) serves as cofactor.

It carries out the reaction oxaloacetate + phosphate = phosphoenolpyruvate + hydrogencarbonate. Its function is as follows. Forms oxaloacetate, a four-carbon dicarboxylic acid source for the tricarboxylic acid cycle. The polypeptide is Phosphoenolpyruvate carboxylase (Chromobacterium violaceum (strain ATCC 12472 / DSM 30191 / JCM 1249 / CCUG 213 / NBRC 12614 / NCIMB 9131 / NCTC 9757 / MK)).